The following is a 146-amino-acid chain: DNA-binding protein Rv2175c (146 aa).

Residues 1-27 (MPGRAPGSTLARVGSIPAGDDVLDPDE) form a disordered region. Thr-9 is subject to Phosphothreonine.

As to quaternary structure, monomer in solution. May form homodimers. Interacts with phosphorylated PknL. Phosphorylated by PknL. Phosphorylation negatively regulates DNA-binding activity.

Its function is as follows. Binds DNA at low salt concentrations. In Mycobacterium tuberculosis (strain ATCC 25618 / H37Rv), this protein is DNA-binding protein Rv2175c.